Reading from the N-terminus, the 970-residue chain is m7GpppN-mRNA hydrolase (970 aa).

Residues 101–228 enclose the Nudix hydrolase domain; that stretch reads KSIPVRGAAI…IKYYLINSMM (128 aa). Phosphoserine is present on Ser116. The short motif at 134 to 155 is the Nudix box element; that stretch reads GKISKDENDIDCCIREVKEEIG. 2 residues coordinate Mn(2+): Glu149 and Glu153. The segment covering 302–314 has biased composition (basic and acidic residues); that stretch reads QHLKEQSGEHNQQ. Disordered stretches follow at residues 302 to 341, 417 to 465, 501 to 520, and 528 to 692; these read QHLKEQSGEHNQQKDQQSSFSSQQQPSIFPSLSEPFANNK, AVSQ…PKLK, SSQKIHASKPDTSFLPNDSV, and YEDF…LSST. A compositionally biased stretch (low complexity) spans 315-334; it reads KDQQSSFSSQQQPSIFPSLS. Ser439 is modified (phosphoserine). Positions 528–539 are enriched in acidic residues; sequence YEDFESSSDEEV. Residues 560–576 show a composition bias toward basic and acidic residues; it reads SEKDSRRSQKEKPRNDA. Over residues 577 to 590 the composition is skewed to polar residues; that stretch reads SKTNLNASAESNSV. Positions 596–608 are enriched in low complexity; that stretch reads KSSPSTQSKQNSS. The span at 625–637 shows a compositional bias: acidic residues; the sequence is DAYEVFESSSDEE. Thr677 bears the Phosphothreonine mark. A compositionally biased stretch (polar residues) spans 677 to 691; sequence TESNKSINETVGLSS. A phosphoserine mark is found at Ser679, Ser682, Ser751, Ser771, Ser773, and Ser778. The tract at residues 831-867 is disordered; sequence LKKNDSTGYPRTEGGPSSEMSTSMKRNDATNNQELDK. The segment covering 848–863 has biased composition (polar residues); sequence SEMSTSMKRNDATNNQ.

The protein belongs to the Nudix hydrolase family. DCP2 subfamily. In terms of assembly, component of the decapping complex composed of DCP1 and DCP2. Interacts with mRNA, LSM2, LSM4 and LSM8. Interacts with EDC3. Requires Mn(2+) as cofactor.

The protein resides in the cytoplasm. The protein localises to the P-body. The enzyme catalyses a 5'-end (N(7)-methyl 5'-triphosphoguanosine)-ribonucleoside in mRNA + H2O = N(7)-methyl-GDP + a 5'-end phospho-ribonucleoside in mRNA + 2 H(+). Functionally, catalytic component of the decapping complex necessary for the degradation of mRNAs, both in normal mRNA turnover and in nonsense-mediated mRNA decay. Removes the 7-methyl guanine cap structure from mRNA molecules, yielding a 5'-phosphorylated mRNA fragment and 7m-GDP. Decapping is the major pathway of mRNA degradation in yeast and occurs through deadenylation, decapping and subsequent 5' to 3' exonucleolytic decay of the transcript body. Blocks autophagy in nutrient-rich conditions by repressing the expression of ATG-related genes through degradation of their transcripts. In Saccharomyces cerevisiae (strain ATCC 204508 / S288c) (Baker's yeast), this protein is m7GpppN-mRNA hydrolase.